The chain runs to 361 residues: Chorismate synthase (361 aa).

Positions 48 and 54 each coordinate NADP(+). FMN is bound by residues R125–S127, N238–A239, G278, K293–S297, and R319.

The protein belongs to the chorismate synthase family. In terms of assembly, homotetramer. The cofactor is FMNH2.

The catalysed reaction is 5-O-(1-carboxyvinyl)-3-phosphoshikimate = chorismate + phosphate. Its pathway is metabolic intermediate biosynthesis; chorismate biosynthesis; chorismate from D-erythrose 4-phosphate and phosphoenolpyruvate: step 7/7. In terms of biological role, catalyzes the anti-1,4-elimination of the C-3 phosphate and the C-6 proR hydrogen from 5-enolpyruvylshikimate-3-phosphate (EPSP) to yield chorismate, which is the branch point compound that serves as the starting substrate for the three terminal pathways of aromatic amino acid biosynthesis. This reaction introduces a second double bond into the aromatic ring system. This Sodalis glossinidius (strain morsitans) protein is Chorismate synthase.